We begin with the raw amino-acid sequence, 215 residues long: uncharacterized protein (215 aa).

Residues 98-119 (AAALAVAVASLCVCTLLLTHIV) traverse the membrane as a helical segment.

It localises to the membrane. This is an uncharacterized protein from Treponema pallidum (strain Nichols).